A 209-amino-acid chain; its full sequence is Thiamine-phosphate synthase (209 aa).

Residues 41–45 and asparagine 73 contribute to the 4-amino-2-methyl-5-(diphosphooxymethyl)pyrimidine site; that span reads QYRNK. Mg(2+) is bound by residues aspartate 74 and aspartate 93. Serine 112 is a binding site for 4-amino-2-methyl-5-(diphosphooxymethyl)pyrimidine. A 2-[(2R,5Z)-2-carboxy-4-methylthiazol-5(2H)-ylidene]ethyl phosphate-binding site is contributed by 139-141; it reads SST. Lysine 142 is a binding site for 4-amino-2-methyl-5-(diphosphooxymethyl)pyrimidine. Position 168 (glycine 168) interacts with 2-[(2R,5Z)-2-carboxy-4-methylthiazol-5(2H)-ylidene]ethyl phosphate.

This sequence belongs to the thiamine-phosphate synthase family. Mg(2+) is required as a cofactor.

It catalyses the reaction 2-[(2R,5Z)-2-carboxy-4-methylthiazol-5(2H)-ylidene]ethyl phosphate + 4-amino-2-methyl-5-(diphosphooxymethyl)pyrimidine + 2 H(+) = thiamine phosphate + CO2 + diphosphate. The enzyme catalyses 2-(2-carboxy-4-methylthiazol-5-yl)ethyl phosphate + 4-amino-2-methyl-5-(diphosphooxymethyl)pyrimidine + 2 H(+) = thiamine phosphate + CO2 + diphosphate. The catalysed reaction is 4-methyl-5-(2-phosphooxyethyl)-thiazole + 4-amino-2-methyl-5-(diphosphooxymethyl)pyrimidine + H(+) = thiamine phosphate + diphosphate. Its pathway is cofactor biosynthesis; thiamine diphosphate biosynthesis; thiamine phosphate from 4-amino-2-methyl-5-diphosphomethylpyrimidine and 4-methyl-5-(2-phosphoethyl)-thiazole: step 1/1. Its function is as follows. Condenses 4-methyl-5-(beta-hydroxyethyl)thiazole monophosphate (THZ-P) and 2-methyl-4-amino-5-hydroxymethyl pyrimidine pyrophosphate (HMP-PP) to form thiamine monophosphate (TMP). This chain is Thiamine-phosphate synthase, found in Methylobacillus flagellatus (strain ATCC 51484 / DSM 6875 / VKM B-1610 / KT).